Reading from the N-terminus, the 1187-residue chain is MNTVVREVGRRERKFFGKVPEKTEIYEDLVKIQKDSFRDFLDKKIMESIKRYMPIKIPVKASGKKNKEFLIDFVDVKFEDSSFSENECRDKGLTYAGKAYLKVRITDSATGEMIEKDDIFLCNIPYMTERGIFIVNGAERVIVNQLVRSPGVYFIKEEETDTSKEMFIAHFLPIKGAWLEILYNPNPGKEVLQVRIDRKRKFNFFLFLRALGYENDLDILRLFPKEIDLDDEVELSNYNNCTVLSDLSFQELDDMDPPRKSTYGMKLYEVLELLKKYEIKSVTVAHLVAEITLEKMKKRYEKEERLTSLEAYKEIFSKLKPTEIPRAQKAKEEIEDMYFNPEKFDFSQIGRQKIQVKLRKAYIDYLREVEKKDISEDMEDKIKYPIKTFAVDKLDIILSARYLLHVKENIEGLDTRDHLGNKRVRSVGELMQIEFERAFSKMIQHAPEKLAGVQSINKISPQSLINSRSIMTAFHQFFASSQLSQFLDQVNPLAELTHKRRLSAIGPGGLKREHAKFEVRDVHHSHYGRMCPIETPEGANIGLITSMAILAKVDEYGFLKTPYYRVKHAKVDLNNIVYLSADEEELYRIAPASAEIGEDGSLVEEYIEARYLGKVSLFHKDEIEYISVTPKQIASVSAALIPFLEHDDANRALMGSNMQRQAVPLLRPQAPFVGTGVEWLAARDSGYLIMAKHKGIVDYVDGRKIVITRLDEENNVLKDSNDEPLKDEYTLLKYVRSNQDMCINQVPIVNVGDVVTKGQAIADGPSMDMGELALGRNIFIGFLPWEGYNFEDAIVVSQELLENDAFTSIHIEVFETKAMDTQLGPEEITADIPNVKKELLRNLDEEGIVKIGSYVSSGDILVGKVTPRGESDTTPEEKLIKSVFGDKGRDIKDSSLTVPHGIEGRVIDVQIFDRKDIPSLEIGVNKYVKVFIATKKTLQVGDKLAGRHGNKGVISTILNKEDMPFLPDGTPLQMLLSPLGVPSRMNIGQVLELHLGWLSMLTNDYYATPIFDGATESEIMDELSKVREEHELYLGDDPDQPNGKIVLRDGRTGEPFDFPVAVGSMYMLKLSHIAKDKIHARSTGPYSLIHQQPLGGKAHFGGQRFGEMEVWALEAHGAAHTLNEMLTYKSDDIKGRNEVYKAILKGENLPEPGIPESFKVLTKELQGLMLDIKLYDEDGNELDVDRL.

It belongs to the RNA polymerase beta chain family. In terms of assembly, the RNAP catalytic core consists of 2 alpha, 1 beta, 1 beta' and 1 omega subunit. When a sigma factor is associated with the core the holoenzyme is formed, which can initiate transcription.

The catalysed reaction is RNA(n) + a ribonucleoside 5'-triphosphate = RNA(n+1) + diphosphate. Functionally, DNA-dependent RNA polymerase catalyzes the transcription of DNA into RNA using the four ribonucleoside triphosphates as substrates. In Petrotoga mobilis (strain DSM 10674 / SJ95), this protein is DNA-directed RNA polymerase subunit beta.